The sequence spans 849 residues: Alanine--tRNA ligase (849 aa).

Positions 551, 555, 653, and 657 each coordinate Zn(2+).

It belongs to the class-II aminoacyl-tRNA synthetase family. It depends on Zn(2+) as a cofactor.

Its subcellular location is the cytoplasm. The enzyme catalyses tRNA(Ala) + L-alanine + ATP = L-alanyl-tRNA(Ala) + AMP + diphosphate. Functionally, catalyzes the attachment of alanine to tRNA(Ala) in a two-step reaction: alanine is first activated by ATP to form Ala-AMP and then transferred to the acceptor end of tRNA(Ala). Also edits incorrectly charged Ser-tRNA(Ala) and Gly-tRNA(Ala) via its editing domain. The sequence is that of Alanine--tRNA ligase from Sulfurimonas denitrificans (strain ATCC 33889 / DSM 1251) (Thiomicrospira denitrificans (strain ATCC 33889 / DSM 1251)).